The following is a 160-amino-acid chain: Putative control protein C.MjaVP (160 aa).

May be involved in control of expression of the type II restriction enzyme MjaV and/or its methyltransferase M.MjaV. This is Putative control protein C.MjaVP from Methanocaldococcus jannaschii (strain ATCC 43067 / DSM 2661 / JAL-1 / JCM 10045 / NBRC 100440) (Methanococcus jannaschii).